A 711-amino-acid polypeptide reads, in one-letter code: Amyloid beta precursor protein binding family B member 1 (711 aa).

Ser135 carries the post-translational modification Phosphoserine. Disordered regions lie at residues 140 to 257, 277 to 300, and 321 to 364; these read NTQG…SDLP, GTTQWEPPGRASPSQGNSPQEESQ, and EPSE…QRNA. Over residues 156–174 the composition is skewed to acidic residues; that stretch reads EVEEEDEDEEEEDEEEEDL. Lys205 bears the N6-acetyllysine mark. The segment covering 224–235 has biased composition (polar residues); it reads SWATLSQGSPSY. The WW domain occupies 254 to 286; the sequence is SDLPAGWMRVQDTSGTYYWHIPTGTTQWEPPGR. The segment covering 288–300 has biased composition (polar residues); it reads SPSQGNSPQEESQ. 2 consecutive PID domains span residues 365-533 and 538-700; these read NPGI…QVEF and NELV…LWGS. Residue Ser460 is modified to Phosphoserine; by PKC. Residue Ser518 is modified to Phosphoserine. Residue Tyr548 is modified to Phosphotyrosine; by ABL1. Ser611 bears the Phosphoserine; by SGK1 mark. Lys702 is modified (N6-acetyllysine).

As to quaternary structure, component of a complex, at least composed of APBB1, RASD1/DEXRAS1 and APP. Interacts (via PID domain 2) with APP (with the intracellular domain of the amyloid-beta precursor protein). Interacts (via PID domain 2) with RASD1/DEXRAS1; impairs the transcription activation activity. Interacts (via PID domain 1) with KAT5/TIP60. Interacts (via the WW domain) with the proline-rich region of APBB1IP. Interacts with TSHZ1 and TSHZ2. Interacts (via the WW domain) with histone H2AX (when phosphorylated on 'Tyr-142') and the proline-rich region of ENAH. Interacts with MAPK8. Interacts (via PID domain 1) with TSHZ3 (via homeobox domain). Interacts with SET. Found in a trimeric complex with HDAC1 and TSHZ3; the interaction between HDAC1 and APBB1 is mediated by TSHZ3. Interacts (via WWW domain) with NEK6. Interacts (via WWW domain) with ABL1. Interacts with RNF157. Interacts with ARF6. In terms of processing, polyubiquitination by RNF157 leads to degradation by the proteasome. Post-translationally, phosphorylation at Ser-611 by SGK1 promotes its localization to the nucleus. Phosphorylated following nuclear translocation. Phosphorylation at Tyr-547 by ABL1 enhances transcriptional activation activity and reduces the affinity for RASD1/DEXRAS1. Phosphorylated at Ser-460 by PKC upon insulin activation. Acetylation at Lys-205 and Lys-702 by KAT5 promotes its transcription activator activity. In terms of tissue distribution, brain, not in liver, very low in other tissues. The long (neuron-specific) form is expressed only in brain.

It localises to the cell membrane. Its subcellular location is the cytoplasm. The protein localises to the nucleus. The protein resides in the cell projection. It is found in the growth cone. It localises to the nucleus speckle. Functionally, transcription coregulator that can have both coactivator and corepressor functions. Adapter protein that forms a transcriptionally active complex with the gamma-secretase-derived amyloid precursor protein (APP) intracellular domain. Plays a central role in the response to DNA damage by translocating to the nucleus and inducing apoptosis. May act by specifically recognizing and binding histone H2AX phosphorylated on 'Tyr-142' (H2AXY142ph) at double-strand breaks (DSBs), recruiting other pro-apoptosis factors such as MAPK8/JNK1. Required for histone H4 acetylation at double-strand breaks (DSBs). Its ability to specifically bind modified histones and chromatin modifying enzymes such as KAT5/TIP60, probably explains its transcription activation activity. Functions in association with TSHZ3, SET and HDAC factors as a transcriptional repressor, that inhibits the expression of CASP4. Associates with chromatin in a region surrounding the CASP4 transcriptional start site(s). Involved in hippocampal neurite branching and neuromuscular junction formation, as a result plays a role in spatial memory functioning. Plays a role in the maintenance of lens transparency. May play a role in muscle cell strength. Acts as a molecular adapter that functions in neurite outgrowth by activating the RAC1-ARF6 axis upon insulin treatment. The protein is Amyloid beta precursor protein binding family B member 1 of Rattus norvegicus (Rat).